The sequence spans 265 residues: Ribosomal RNA small subunit methyltransferase A (265 aa).

Residues H11, L13, G38, E59, D83, and N100 each coordinate S-adenosyl-L-methionine.

This sequence belongs to the class I-like SAM-binding methyltransferase superfamily. rRNA adenine N(6)-methyltransferase family. RsmA subfamily.

The protein resides in the cytoplasm. The enzyme catalyses adenosine(1518)/adenosine(1519) in 16S rRNA + 4 S-adenosyl-L-methionine = N(6)-dimethyladenosine(1518)/N(6)-dimethyladenosine(1519) in 16S rRNA + 4 S-adenosyl-L-homocysteine + 4 H(+). Specifically dimethylates two adjacent adenosines (A1518 and A1519) in the loop of a conserved hairpin near the 3'-end of 16S rRNA in the 30S particle. May play a critical role in biogenesis of 30S subunits. This chain is Ribosomal RNA small subunit methyltransferase A, found in Thermosynechococcus vestitus (strain NIES-2133 / IAM M-273 / BP-1).